Consider the following 347-residue polypeptide: Quinolinate synthase (347 aa).

Iminosuccinate-binding residues include histidine 47 and serine 68. Cysteine 113 serves as a coordination point for [4Fe-4S] cluster. Iminosuccinate-binding positions include 139–141 and serine 156; that span reads YAN. [4Fe-4S] cluster is bound at residue cysteine 200. Iminosuccinate-binding positions include 226–228 and threonine 243; that span reads HPE. Cysteine 297 provides a ligand contact to [4Fe-4S] cluster.

This sequence belongs to the quinolinate synthase family. Type 1 subfamily. The cofactor is [4Fe-4S] cluster.

Its subcellular location is the cytoplasm. The enzyme catalyses iminosuccinate + dihydroxyacetone phosphate = quinolinate + phosphate + 2 H2O + H(+). It participates in cofactor biosynthesis; NAD(+) biosynthesis; quinolinate from iminoaspartate: step 1/1. Functionally, catalyzes the condensation of iminoaspartate with dihydroxyacetone phosphate to form quinolinate. The sequence is that of Quinolinate synthase from Salmonella paratyphi A (strain ATCC 9150 / SARB42).